The sequence spans 265 residues: Oxygen-evolving enhancer protein 2-2, chloroplastic (265 aa).

A chloroplast-targeting transit peptide spans 1 to 79; that stretch reads MASTQCFLHH…VGSKVSPADA (79 aa).

Belongs to the PsbP family.

The protein resides in the plastid. It is found in the chloroplast thylakoid membrane. Its function is as follows. May be involved in the regulation of photosystem II. This chain is Oxygen-evolving enhancer protein 2-2, chloroplastic (PSBP2), found in Nicotiana tabacum (Common tobacco).